The sequence spans 767 residues: DNA topoisomerase 1 (767 aa).

A compositionally biased stretch (basic and acidic residues) spans 1-23; sequence MSGDHLHNDSQIEADFRLNDSHK. Residues 1–201 form a disordered region; that stretch reads MSGDHLHNDS…NKKKKPKKEE (201 aa). Residue serine 2 is modified to N-acetylserine. Phosphoserine occurs at positions 2 and 10. The span at 24-39 shows a compositional bias: basic residues; that stretch reads HKDKHKDREHRHKEHK. Positions 40–110 are enriched in basic and acidic residues; that stretch reads KDKDKDREKS…DAKIKKEKEN (71 aa). Serine 59 is subject to Phosphoserine. A Glycyl lysine isopeptide (Lys-Gly) (interchain with G-Cter in SUMO2) cross-link involves residue lysine 103. Residue lysine 105 forms a Glycyl lysine isopeptide (Lys-Gly) (interchain with G-Cter in SUMO); alternate linkage. Lysine 105 is covalently cross-linked (Glycyl lysine isopeptide (Lys-Gly) (interchain with G-Cter in SUMO2); alternate). At serine 114 the chain carries Phosphoserine. Lysine 119 participates in a covalent cross-link: Glycyl lysine isopeptide (Lys-Gly) (interchain with G-Cter in SUMO); alternate. Residue lysine 119 forms a Glycyl lysine isopeptide (Lys-Gly) (interchain with G-Cter in SUMO2); alternate linkage. A Glycyl lysine isopeptide (Lys-Gly) (interchain with G-Cter in SUMO1); alternate cross-link involves residue lysine 119. The segment covering 131–168 has biased composition (basic and acidic residues); sequence PKEDIKPLKRLRDEDDADYKPKKIKTEDIKKEKKRKSE. Glycyl lysine isopeptide (Lys-Gly) (interchain with G-Cter in SUMO2) cross-links involve residues lysine 136 and lysine 150. Lysine 155 participates in a covalent cross-link: Glycyl lysine isopeptide (Lys-Gly) (interchain with G-Cter in SUMO); alternate. A Glycyl lysine isopeptide (Lys-Gly) (interchain with G-Cter in SUMO2); alternate cross-link involves residue lysine 155. Residues lysine 160 and lysine 166 each participate in a glycyl lysine isopeptide (Lys-Gly) (interchain with G-Cter in SUMO2) cross-link. A Glycyl lysine isopeptide (Lys-Gly) (interchain with G-Cter in SUMO2); alternate cross-link involves residue lysine 174. Lysine 174 is subject to N6-acetyllysine; alternate. Residues 181–201 show a composition bias toward basic and acidic residues; sequence KDKDKKVAEPDNKKKKPKKEE. Lysine 206 participates in a covalent cross-link: Glycyl lysine isopeptide (Lys-Gly) (interchain with G-Cter in SUMO2). The residue at position 282 (lysine 282) is an N6-acetyllysine. A Glycyl lysine isopeptide (Lys-Gly) (interchain with G-Cter in SUMO2) cross-link involves residue lysine 338. Interaction with DNA stretches follow at residues 427 to 428 and 490 to 495; these read KY and RAGNEK. The Topo IB-type catalytic domain maps to 434–767; sequence SSRIKGEKDW…IDMTDEDYEF (334 aa). The residue at position 508 (serine 508) is a Phosphoserine; by CK2. Lysine 551 is covalently cross-linked (Glycyl lysine isopeptide (Lys-Gly) (interchain with G-Cter in SUMO2)). The interval 587-589 is interaction with DNA; it reads TAK. Residues lysine 644, lysine 702, and lysine 714 each participate in a glycyl lysine isopeptide (Lys-Gly) (interchain with G-Cter in SUMO2) cross-link. Tyrosine 725 functions as the O-(3'-phospho-DNA)-tyrosine intermediate in the catalytic mechanism.

Belongs to the type IB topoisomerase family. As to quaternary structure, monomer. Interacts with ERCC6. Interacts with TPRN; TPRN interacts with a number of DNA damage response proteins, is recruited to sites of DNA damage and may play a role in DNA damage repair. Sumoylated. Lys-119 is the main site of sumoylation. Sumoylation plays a role in partitioning TOP1 between nucleoli and nucleoplasm. Levels are dramatically increased on camptothecin (CPT) treatment. Post-translationally, phosphorylation at Ser-508 by CK2 increases binding to supercoiled DNA and sensitivity to camptothecin.

It localises to the nucleus. Its subcellular location is the nucleolus. The protein localises to the nucleoplasm. The catalysed reaction is ATP-independent breakage of single-stranded DNA, followed by passage and rejoining.. Its function is as follows. Releases the supercoiling and torsional tension of DNA introduced during the DNA replication and transcription by transiently cleaving and rejoining one strand of the DNA duplex. Introduces a single-strand break via transesterification at a target site in duplex DNA. The scissile phosphodiester is attacked by the catalytic tyrosine of the enzyme, resulting in the formation of a DNA-(3'-phosphotyrosyl)-enzyme intermediate and the expulsion of a 5'-OH DNA strand. The free DNA strand then rotates around the intact phosphodiester bond on the opposing strand, thus removing DNA supercoils. Finally, in the religation step, the DNA 5'-OH attacks the covalent intermediate to expel the active-site tyrosine and restore the DNA phosphodiester backbone. Regulates the alternative splicing of tissue factor (F3) pre-mRNA in endothelial cells. Involved in the circadian transcription of the core circadian clock component BMAL1 by altering the chromatin structure around the ROR response elements (ROREs) on the BMAL1 promoter. This Mus musculus (Mouse) protein is DNA topoisomerase 1 (Top1).